A 238-amino-acid polypeptide reads, in one-letter code: 5-amino-6-(5-phospho-D-ribitylamino)uracil phosphatase YigB (238 aa).

The active-site Nucleophile is the aspartate 16. Residues aspartate 16, aspartate 18, and aspartate 188 each coordinate Mg(2+). Substrate is bound at residue 16–18 (DLD).

The protein belongs to the HAD-like hydrolase superfamily. Mg(2+) is required as a cofactor. Mn(2+) serves as cofactor. It depends on Co(2+) as a cofactor. Requires Zn(2+) as cofactor.

It catalyses the reaction 5-amino-6-(5-phospho-D-ribitylamino)uracil + H2O = 5-amino-6-(D-ribitylamino)uracil + phosphate. It participates in cofactor biosynthesis; riboflavin biosynthesis; 5-amino-6-(D-ribitylamino)uracil from GTP: step 4/4. Functionally, catalyzes the dephosphorylation of 5-amino-6-(5-phospho-D-ribitylamino)uracil, and thus could be involved in the riboflavin biosynthesis pathway. Is also able to dephosphorylate flavin mononucleotide (FMN) and other phosphoric acid esters. YigB is important for the formation of dormant persister cells. This Escherichia coli (strain K12) protein is 5-amino-6-(5-phospho-D-ribitylamino)uracil phosphatase YigB (yigB).